Reading from the N-terminus, the 587-residue chain is Nucleoporin p58/p45 (587 aa).

5 consecutive repeat copies span residues Phe7 to Gly8, Phe30 to Gly31, Phe44 to Gly45, Phe63 to Gly64, and Phe68 to Gly69. Residues Phe7–Gly567 form a 14 X 2 AA repeats of F-G region. The disordered stretch occupies residues Thr196–Pro236. Residues Ser213–Asn234 show a composition bias toward basic and acidic residues. 2 coiled-coil regions span residues Glu244 to Ser264 and Glu302 to Thr369. Residue Thr319 is modified to Phosphothreonine. 9 repeat units span residues Phe476–Gly477, Phe480–Gly481, Phe501–Gly502, Phe507–Gly508, Phe517–Gly518, Phe519–Gly520, Phe533–Gly534, Phe556–Gly557, and Phe566–Gly567. The interval Gly565–Arg587 is disordered.

Belongs to the NUP58 family. Component of the p62 complex, a complex at least composed of NUP62, NUP54, and NUP58. Interacts with NUTF2. Interacts with SRP1-alpha and Importin p97 proteins when they are together, but not with SRP1-alpha protein alone. O-glycosylated.

It localises to the nucleus. The protein localises to the nuclear pore complex. The protein resides in the nucleus membrane. Its function is as follows. Component of the nuclear pore complex, a complex required for the trafficking across the nuclear membrane. This is Nucleoporin p58/p45 from Mus musculus (Mouse).